The sequence spans 304 residues: UDP-3-O-acyl-N-acetylglucosamine deacetylase (304 aa).

His-78, His-237, and Asp-241 together coordinate Zn(2+). Residue His-264 is the Proton donor of the active site.

It belongs to the LpxC family. Zn(2+) is required as a cofactor.

It catalyses the reaction a UDP-3-O-[(3R)-3-hydroxyacyl]-N-acetyl-alpha-D-glucosamine + H2O = a UDP-3-O-[(3R)-3-hydroxyacyl]-alpha-D-glucosamine + acetate. The protein operates within glycolipid biosynthesis; lipid IV(A) biosynthesis; lipid IV(A) from (3R)-3-hydroxytetradecanoyl-[acyl-carrier-protein] and UDP-N-acetyl-alpha-D-glucosamine: step 2/6. Its function is as follows. Catalyzes the hydrolysis of UDP-3-O-myristoyl-N-acetylglucosamine to form UDP-3-O-myristoylglucosamine and acetate, the committed step in lipid A biosynthesis. This is UDP-3-O-acyl-N-acetylglucosamine deacetylase from Methylococcus capsulatus (strain ATCC 33009 / NCIMB 11132 / Bath).